The primary structure comprises 102 residues: DET1- and DDB1-associated protein 1 (102 aa).

N-acetylalanine is present on alanine 2. At serine 33 the chain carries Phosphoserine. Basic and acidic residues-rich tracts occupy residues 66–75 (KNAAKKRDQE) and 91–102 (ARTDSPDMHEDT). The tract at residues 66–102 (KNAAKKRDQEQVELEGESSAPPRKVARTDSPDMHEDT) is disordered. A Phosphoserine modification is found at serine 95.

The protein belongs to the DDA1 family. As to quaternary structure, component of numerous DCX (DDB1-CUL4-X-box) E3 ubiquitin-protein ligase complexes which consist of a core of DDB1, cullin-4 (CUL4A or CUL4B), DDA1 and RBX1. Component of the DCX(DCAF15) complex, also named CLR4(DCAF15) complex, composed of DCAF15, DDB1, cullin-4 (CUL4A or CUL4B), DDA1 and RBX1. Part of the DDD core complex containing DET1, DDA1 and DDB1; the DDD core complex recruits a specific UBE2E enzyme, such as UBE2E1, UBE2E2 UBE2E3, to form specific DDD-E2 complexes.

It participates in protein modification; protein ubiquitination. Its function is as follows. Functions as a component of numerous distinct DCX (DDB1-CUL4-X-box) E3 ubiquitin-protein ligase complexes which mediate the ubiquitination and subsequent proteasomal degradation of target proteins. In the DCX complexes, acts as a scaffolding subunit required to stabilize the complex. This Bos taurus (Bovine) protein is DET1- and DDB1-associated protein 1.